The sequence spans 204 residues: N-(5'-phosphoribosyl)anthranilate isomerase (204 aa).

The protein belongs to the TrpF family.

It catalyses the reaction N-(5-phospho-beta-D-ribosyl)anthranilate = 1-(2-carboxyphenylamino)-1-deoxy-D-ribulose 5-phosphate. It participates in amino-acid biosynthesis; L-tryptophan biosynthesis; L-tryptophan from chorismate: step 3/5. This Oceanobacillus iheyensis (strain DSM 14371 / CIP 107618 / JCM 11309 / KCTC 3954 / HTE831) protein is N-(5'-phosphoribosyl)anthranilate isomerase.